We begin with the raw amino-acid sequence, 216 residues long: MAGYRVEDDYDYLFKVVLIGDSGVGKSNLLSRFTKNEFNLESKSTIGVEFATRTLKVDGKVVKAQIWDTAGQERYRAITSAYYRGAVGALLVYDVTRRATFENVDRWLKELKNHTDPNIVVMLVGNKSDLRHLLAVPTEDGKSYAEQESLCFMETSALEATNVEDAFAEVLTQIYRITSKKQVEAGEDGNASVPKGEKIEVKNDVSALKKLGCCSN.

Residue Gly-20–Ser-27 coordinates GTP. An Effector region motif is present at residues Ser-42–Phe-50. GTP-binding positions include Asp-68–Gln-72, Asn-126–Asp-129, and Ser-156–Ala-157. S-geranylgeranyl cysteine attachment occurs at residues Cys-213 and Cys-214.

Belongs to the small GTPase superfamily. Rab family.

The protein resides in the cell membrane. Its function is as follows. Intracellular vesicle trafficking and protein transport. The chain is Ras-related protein RABA1b (RABA1B) from Arabidopsis thaliana (Mouse-ear cress).